We begin with the raw amino-acid sequence, 34 residues long: Photosystem II reaction center protein M (34 aa).

The helical transmembrane segment at 5 to 25 (ILAVIATALFVLIPTAFLLIL) threads the bilayer.

This sequence belongs to the PsbM family. In terms of assembly, PSII is composed of 1 copy each of membrane proteins PsbA, PsbB, PsbC, PsbD, PsbE, PsbF, PsbH, PsbI, PsbJ, PsbK, PsbL, PsbM, PsbT, PsbX, PsbY, PsbZ, Psb30/Ycf12, at least 3 peripheral proteins of the oxygen-evolving complex and a large number of cofactors. It forms dimeric complexes.

It is found in the plastid. The protein localises to the chloroplast thylakoid membrane. In terms of biological role, one of the components of the core complex of photosystem II (PSII). PSII is a light-driven water:plastoquinone oxidoreductase that uses light energy to abstract electrons from H(2)O, generating O(2) and a proton gradient subsequently used for ATP formation. It consists of a core antenna complex that captures photons, and an electron transfer chain that converts photonic excitation into a charge separation. This subunit is found at the monomer-monomer interface. This is Photosystem II reaction center protein M from Chaetosphaeridium globosum (Charophycean green alga).